The chain runs to 208 residues: Ribosome maturation factor RimP (208 aa).

Positions 189–208 (EAPETGATTMARDGSEEETK) are disordered.

This sequence belongs to the RimP family.

It is found in the cytoplasm. In terms of biological role, required for maturation of 30S ribosomal subunits. In Ruegeria pomeroyi (strain ATCC 700808 / DSM 15171 / DSS-3) (Silicibacter pomeroyi), this protein is Ribosome maturation factor RimP.